Reading from the N-terminus, the 509-residue chain is MMKPVPKLWVVISSAFVFCLLVLFQINKSDLIEANLQITHQVNNFLISFVASSNNQILNHTKHANESDGIRAKQLEEEETDTCAGRYIYMYNLPSTFNDDIIKECRPLIKWFDMCPFMVNSGLGPQILVSDKTTARVLTVKTGSWYSTNQFLLSVIFRERMKHYECLTNNSSLASAIYVPYYAGFDVSRHLWGYNVTVRDELAIKLAQWLRERPEWGKMYGRDHFFVTGRIGWDFRRFHDEDSDWGSKLMLLPEFSNLTMLGIETTAWANEFAIPYPTYFHPKSLTEIWRWQKKVKSVKRKYLFSFVGGPRPKLDGSIRGEIIKQCLASHGKCNFLNCFVNDCDNPVKIMKVFENSVFCLQPSGDSYTRRSIFDSILAGCIPVFFSPGSGYNQYIWYFPKDYTKYSVYIPENEMRNGTVSLKNILGMIAKERILRMRKEVVKIIPKIIYNKPGFGPEKIEDAFDIAVDRMLERVAMVKRMMEEGKDVQSQYYSQTKDLKKLEIIHEKTA.

Residues 1-3 (MMK) lie on the Cytoplasmic side of the membrane. Residues 4-24 (PVPKLWVVISSAFVFCLLVLF) form a helical; Signal-anchor for type II membrane protein membrane-spanning segment. Residues 25–509 (QINKSDLIEA…KLEIIHEKTA (485 aa)) lie on the Lumenal side of the membrane. N-linked (GlcNAc...) asparagine glycans are attached at residues N27, N59, N65, N169, N170, N195, N257, and N416.

This sequence belongs to the glycosyltransferase 47 family. As to expression, expressed in pollen grains.

The protein resides in the golgi apparatus membrane. Functionally, functions in xyloglucan synthesis by adding side chains to the xylosylated glucan backbone. Involved in the galactosylation of hemicellulose xyloglucan. This Arabidopsis thaliana (Mouse-ear cress) protein is Probable xyloglucan galactosyltransferase GT12.